A 448-amino-acid chain; its full sequence is Asparagine--tRNA ligase (448 aa).

The protein belongs to the class-II aminoacyl-tRNA synthetase family. In terms of assembly, homodimer.

It localises to the cytoplasm. It catalyses the reaction tRNA(Asn) + L-asparagine + ATP = L-asparaginyl-tRNA(Asn) + AMP + diphosphate + H(+). The polypeptide is Asparagine--tRNA ligase (Streptococcus agalactiae serotype Ia (strain ATCC 27591 / A909 / CDC SS700)).